Here is a 49-residue protein sequence, read N- to C-terminus: Disintegrin eristostatin (49 aa).

Residues 1 to 49 (QEEPCATGPCCRRCKFKRAGKVCRVARGDWNDDYCTGKSCDCPKNPWNG) form the Disintegrin domain. 4 disulfide bridges follow: C5-C14, C10-C35, C11-C40, and C23-C42. Positions 27-29 (RGD) match the Cell attachment site motif.

It belongs to the venom metalloproteinase (M12B) family. P-II subfamily. P-IIa sub-subfamily. Monomer. Expressed by the venom gland.

It is found in the secreted. In terms of biological role, is a potent inhibitor of ADP-induced platelet aggregation. Acts by binding to alpha-IIb/beta-3 (ITGA2B/ITGB3) receptor on the platelet surface. Binds with the same high affinity to resting and activated platelets. Also binds the alpha-4/beta-1 (ITGA4/ITGB1) integrin. Is a potent inhibitor of human and murine melanoma metastases in mouse model systems, also due to the inhibition of binding between the alpha-4/beta-1 integrin and the vascular cell adhesion protein VCAM1. Reacts neither with the integrin alpha-V/beta-3 (ITGAV/ITGB3) vitronectin receptor nor with the integrin alpha-5/beta-1 (ITGA5/ITGB1) fibronectin receptor. Has no effect on cell proliferation or angiogenesis. Specifically inhibits cell migration on fibronectin, but not that on collagen IV or laminin. May involve fibronectin-binding integrins that mediate cell migration. This chain is Disintegrin eristostatin, found in Eristicophis macmahoni (Leaf-nosed viper).